Here is a 327-residue protein sequence, read N- to C-terminus: Undecaprenyl-phosphate 4-deoxy-4-formamido-L-arabinose transferase (327 aa).

Helical transmembrane passes span 235–255 and 270–290; these read LLSL…VLLV and VFTL…GMGL.

This sequence belongs to the glycosyltransferase 2 family.

It is found in the cell inner membrane. It catalyses the reaction UDP-4-deoxy-4-formamido-beta-L-arabinose + di-trans,octa-cis-undecaprenyl phosphate = 4-deoxy-4-formamido-alpha-L-arabinopyranosyl di-trans,octa-cis-undecaprenyl phosphate + UDP. The protein operates within glycolipid biosynthesis; 4-amino-4-deoxy-alpha-L-arabinose undecaprenyl phosphate biosynthesis; 4-amino-4-deoxy-alpha-L-arabinose undecaprenyl phosphate from UDP-4-deoxy-4-formamido-beta-L-arabinose and undecaprenyl phosphate: step 1/2. It participates in bacterial outer membrane biogenesis; lipopolysaccharide biosynthesis. Catalyzes the transfer of 4-deoxy-4-formamido-L-arabinose from UDP to undecaprenyl phosphate. The modified arabinose is attached to lipid A and is required for resistance to polymyxin and cationic antimicrobial peptides. The chain is Undecaprenyl-phosphate 4-deoxy-4-formamido-L-arabinose transferase from Yersinia pestis bv. Antiqua (strain Antiqua).